The chain runs to 180 residues: MANRLKEKYLNEVVPALTEKFNYTSVMAVPKVDKIVLNMGVGDAVSNAKNLEKAAAELALISGQKPLITKAKKSIAGFRLREGVAIGAKVTLRGQRMYEFLDKLVTVSLPRVRDFHGVPTKSFDGRGNYTLGVKEQLIFPEINFDNVDKVRGLDIVIVTTANTDEESRELLTGLGMPFAK.

This sequence belongs to the universal ribosomal protein uL5 family. In terms of assembly, part of the 50S ribosomal subunit; part of the 5S rRNA/L5/L18/L25 subcomplex. Contacts the 5S rRNA and the P site tRNA. Forms a bridge to the 30S subunit in the 70S ribosome.

Functionally, this is one of the proteins that bind and probably mediate the attachment of the 5S RNA into the large ribosomal subunit, where it forms part of the central protuberance. In the 70S ribosome it contacts protein S13 of the 30S subunit (bridge B1b), connecting the 2 subunits; this bridge is implicated in subunit movement. Contacts the P site tRNA; the 5S rRNA and some of its associated proteins might help stabilize positioning of ribosome-bound tRNAs. In Streptococcus mutans serotype c (strain ATCC 700610 / UA159), this protein is Large ribosomal subunit protein uL5.